A 114-amino-acid chain; its full sequence is Iron-sulfur cluster insertion protein ErpA (114 aa).

Residues Cys42, Cys106, and Cys108 each coordinate iron-sulfur cluster.

This sequence belongs to the HesB/IscA family. As to quaternary structure, homodimer. Iron-sulfur cluster is required as a cofactor.

Functionally, required for insertion of 4Fe-4S clusters for at least IspG. The chain is Iron-sulfur cluster insertion protein ErpA from Buchnera aphidicola subsp. Acyrthosiphon pisum (strain 5A).